A 482-amino-acid polypeptide reads, in one-letter code: tRNA sulfurtransferase (482 aa).

The region spanning 61–165 is the THUMP domain; it reads LAIRDALTRI…DDRLLLIKGR (105 aa). ATP-binding positions include 183 to 184, K265, G287, and Q296; that span reads LI. The cysteines at positions 344 and 456 are disulfide-linked. In terms of domain architecture, Rhodanese spans 404-482; sequence FGPNDVILDI…GFENVKVYRP (79 aa). The Cysteine persulfide intermediate role is filled by C456.

It belongs to the ThiI family.

It localises to the cytoplasm. It carries out the reaction [ThiI sulfur-carrier protein]-S-sulfanyl-L-cysteine + a uridine in tRNA + 2 reduced [2Fe-2S]-[ferredoxin] + ATP + H(+) = [ThiI sulfur-carrier protein]-L-cysteine + a 4-thiouridine in tRNA + 2 oxidized [2Fe-2S]-[ferredoxin] + AMP + diphosphate. The catalysed reaction is [ThiS sulfur-carrier protein]-C-terminal Gly-Gly-AMP + S-sulfanyl-L-cysteinyl-[cysteine desulfurase] + AH2 = [ThiS sulfur-carrier protein]-C-terminal-Gly-aminoethanethioate + L-cysteinyl-[cysteine desulfurase] + A + AMP + 2 H(+). It functions in the pathway cofactor biosynthesis; thiamine diphosphate biosynthesis. Its function is as follows. Catalyzes the ATP-dependent transfer of a sulfur to tRNA to produce 4-thiouridine in position 8 of tRNAs, which functions as a near-UV photosensor. Also catalyzes the transfer of sulfur to the sulfur carrier protein ThiS, forming ThiS-thiocarboxylate. This is a step in the synthesis of thiazole, in the thiamine biosynthesis pathway. The sulfur is donated as persulfide by IscS. In Salmonella enteritidis PT4 (strain P125109), this protein is tRNA sulfurtransferase.